Reading from the N-terminus, the 447-residue chain is Alpha-1,3-mannosyl-glycoprotein 2-beta-N-acetylglucosaminyltransferase (447 aa).

Residues 1 to 6 (MLKKQS) lie on the Cytoplasmic side of the membrane. A helical; Signal-anchor for type II membrane protein membrane pass occupies residues 7 to 29 (AGLVLWGAILFVAWNALLLLFFW). At 30 to 447 (TRPVPSRLPS…TWDGYDPSWT (418 aa)) the chain is on the lumenal side. The cysteines at positions 115 and 145 are disulfide-linked. The substrate site is built by R117, D144, H190, and D212. D213 serves as a coordination point for Mn(2+). An intrachain disulfide couples C239 to C305. The active-site Proton acceptor is the D291. S322 lines the substrate pocket.

The protein belongs to the glycosyltransferase 13 family. As to quaternary structure, interacts with MGAT4D. Interacts with BRI3. Requires Mn(2+) as cofactor.

It is found in the golgi apparatus membrane. It localises to the cytoplasm. Its subcellular location is the perinuclear region. The catalysed reaction is N(4)-(alpha-D-Man-(1-&gt;3)-[alpha-D-Man-(1-&gt;3)-[alpha-D-Man-(1-&gt;6)]-alpha-D-Man-(1-&gt;6)]-beta-D-Man-(1-&gt;4)-beta-D-GlcNAc-(1-&gt;4)-beta-D-GlcNAc)-L-asparaginyl-[protein] (N-glucan mannose isomer 5A1,2) + UDP-N-acetyl-alpha-D-glucosamine = N(4)-{beta-D-GlcNAc-(1-&gt;2)-alpha-D-Man-(1-&gt;3)-[alpha-D-Man-(1-&gt;3)-[alpha-D-Man-(1-&gt;6)]-alpha-D-Man-(1-&gt;6)]-beta-D-Man-(1-&gt;4)-beta-D-GlcNAc-(1-&gt;4)-beta-D-GlcNAc}-L-asparaginyl-[protein] + UDP + H(+). The protein operates within protein modification; protein glycosylation. Initiates complex N-linked carbohydrate formation. Essential for the conversion of high-mannose to hybrid and complex N-glycans. The polypeptide is Alpha-1,3-mannosyl-glycoprotein 2-beta-N-acetylglucosaminyltransferase (MGAT1) (Oryctolagus cuniculus (Rabbit)).